We begin with the raw amino-acid sequence, 86 residues long: MAEVVDERVYTVPLRDAKKAPLKKRAPRAVKALRQFIERHMKAEEVRIGNDVNEKIWERGIKKPPSKIRVRAVKYADGTVEVRLAE.

The protein belongs to the eukaryotic ribosomal protein eL31 family.

This Methanopyrus kandleri (strain AV19 / DSM 6324 / JCM 9639 / NBRC 100938) protein is Large ribosomal subunit protein eL31.